The chain runs to 257 residues: Type III pantothenate kinase (257 aa).

6–13 (DCGNTNTV) contacts ATP. Residue 107-110 (GPDR) participates in substrate binding. The active-site Proton acceptor is D109. D129 lines the K(+) pocket. An ATP-binding site is contributed by T132. T184 contacts substrate.

This sequence belongs to the type III pantothenate kinase family. In terms of assembly, homodimer. Requires NH4(+) as cofactor. The cofactor is K(+).

The protein localises to the cytoplasm. It catalyses the reaction (R)-pantothenate + ATP = (R)-4'-phosphopantothenate + ADP + H(+). It participates in cofactor biosynthesis; coenzyme A biosynthesis; CoA from (R)-pantothenate: step 1/5. Functionally, catalyzes the phosphorylation of pantothenate (Pan), the first step in CoA biosynthesis. This Roseobacter denitrificans (strain ATCC 33942 / OCh 114) (Erythrobacter sp. (strain OCh 114)) protein is Type III pantothenate kinase.